Here is a 214-residue protein sequence, read N- to C-terminus: Ion-translocating oxidoreductase complex subunit G (214 aa).

The chain crosses the membrane as a helical span at residues 13–33 (ALLLGLFALVGVGLVALVQQF). Thr-180 carries the FMN phosphoryl threonine modification.

It belongs to the RnfG family. In terms of assembly, the complex is composed of six subunits: RnfA, RnfB, RnfC, RnfD, RnfE and RnfG. FMN is required as a cofactor.

The protein resides in the cell inner membrane. Functionally, part of a membrane-bound complex that couples electron transfer with translocation of ions across the membrane. This is Ion-translocating oxidoreductase complex subunit G from Pseudomonas aeruginosa (strain UCBPP-PA14).